The sequence spans 236 residues: Small ribosomal subunit protein uS3 (236 aa).

In terms of domain architecture, KH type-2 spans 39–107; sequence VREFLKKSLS…PAQISITEIK (69 aa).

This sequence belongs to the universal ribosomal protein uS3 family. In terms of assembly, part of the 30S ribosomal subunit. Forms a tight complex with proteins S10 and S14.

Binds the lower part of the 30S subunit head. Binds mRNA in the 70S ribosome, positioning it for translation. The polypeptide is Small ribosomal subunit protein uS3 (Wigglesworthia glossinidia brevipalpis).